Here is a 383-residue protein sequence, read N- to C-terminus: Probable tRNA sulfurtransferase (383 aa).

The region spanning 58-158 is the THUMP domain; it reads NEIIHILKMI…ENKSYVWFDK (101 aa). Residues 176–177, 201–202, R259, G281, and Q290 each bind ATP; these read LL and TF.

The protein belongs to the ThiI family.

Its subcellular location is the cytoplasm. The enzyme catalyses [ThiI sulfur-carrier protein]-S-sulfanyl-L-cysteine + a uridine in tRNA + 2 reduced [2Fe-2S]-[ferredoxin] + ATP + H(+) = [ThiI sulfur-carrier protein]-L-cysteine + a 4-thiouridine in tRNA + 2 oxidized [2Fe-2S]-[ferredoxin] + AMP + diphosphate. It catalyses the reaction [ThiS sulfur-carrier protein]-C-terminal Gly-Gly-AMP + S-sulfanyl-L-cysteinyl-[cysteine desulfurase] + AH2 = [ThiS sulfur-carrier protein]-C-terminal-Gly-aminoethanethioate + L-cysteinyl-[cysteine desulfurase] + A + AMP + 2 H(+). It functions in the pathway cofactor biosynthesis; thiamine diphosphate biosynthesis. Functionally, catalyzes the ATP-dependent transfer of a sulfur to tRNA to produce 4-thiouridine in position 8 of tRNAs, which functions as a near-UV photosensor. Also catalyzes the transfer of sulfur to the sulfur carrier protein ThiS, forming ThiS-thiocarboxylate. This is a step in the synthesis of thiazole, in the thiamine biosynthesis pathway. The sulfur is donated as persulfide by IscS. The protein is Probable tRNA sulfurtransferase of Malacoplasma penetrans (strain HF-2) (Mycoplasma penetrans).